Reading from the N-terminus, the 57-residue chain is Kunitz-type serine protease inhibitor 2 (57 aa).

The region spanning 5 to 55 (CELPAETGLCKARIRSFHYNRAAQQCLEFIYGGCGGNANRFKTIDECHRTC) is the BPTI/Kunitz inhibitor domain. 3 disulfide bridges follow: cysteine 5–cysteine 55, cysteine 14–cysteine 38, and cysteine 30–cysteine 51.

It belongs to the venom Kunitz-type family. In terms of tissue distribution, expressed by the venom gland.

The protein resides in the secreted. Functionally, serine protease inhibitor. The sequence is that of Kunitz-type serine protease inhibitor 2 from Naja nivea (Cape cobra).